Reading from the N-terminus, the 390-residue chain is NADH-quinone oxidoreductase subunit D (390 aa).

It belongs to the complex I 49 kDa subunit family. In terms of assembly, NDH-1 is composed of 14 different subunits. Subunits NuoB, C, D, E, F, and G constitute the peripheral sector of the complex.

It is found in the cell inner membrane. It carries out the reaction a quinone + NADH + 5 H(+)(in) = a quinol + NAD(+) + 4 H(+)(out). In terms of biological role, NDH-1 shuttles electrons from NADH, via FMN and iron-sulfur (Fe-S) centers, to quinones in the respiratory chain. The immediate electron acceptor for the enzyme in this species is believed to be ubiquinone. Couples the redox reaction to proton translocation (for every two electrons transferred, four hydrogen ions are translocated across the cytoplasmic membrane), and thus conserves the redox energy in a proton gradient. In Geobacter sulfurreducens (strain ATCC 51573 / DSM 12127 / PCA), this protein is NADH-quinone oxidoreductase subunit D.